A 205-amino-acid chain; its full sequence is Holliday junction branch migration complex subunit RuvA (205 aa).

Positions 1-64 (MIGKLKGSIE…EDQLKLFGFV (64 aa)) are domain I. The interval 65–143 (SALEREWFNL…AFAGDASASI (79 aa)) is domain II. A flexible linker region spans residues 144 to 153 (GLKQELGEGV). The tract at residues 153–205 (VASAPVADAVSALTNLGYSRDQAANAVAAALKNGGEGGDSAKLIRLGLKELSR) is domain III.

It belongs to the RuvA family. As to quaternary structure, homotetramer. Forms an RuvA(8)-RuvB(12)-Holliday junction (HJ) complex. HJ DNA is sandwiched between 2 RuvA tetramers; dsDNA enters through RuvA and exits via RuvB. An RuvB hexamer assembles on each DNA strand where it exits the tetramer. Each RuvB hexamer is contacted by two RuvA subunits (via domain III) on 2 adjacent RuvB subunits; this complex drives branch migration. In the full resolvosome a probable DNA-RuvA(4)-RuvB(12)-RuvC(2) complex forms which resolves the HJ.

The protein resides in the cytoplasm. In terms of biological role, the RuvA-RuvB-RuvC complex processes Holliday junction (HJ) DNA during genetic recombination and DNA repair, while the RuvA-RuvB complex plays an important role in the rescue of blocked DNA replication forks via replication fork reversal (RFR). RuvA specifically binds to HJ cruciform DNA, conferring on it an open structure. The RuvB hexamer acts as an ATP-dependent pump, pulling dsDNA into and through the RuvAB complex. HJ branch migration allows RuvC to scan DNA until it finds its consensus sequence, where it cleaves and resolves the cruciform DNA. The polypeptide is Holliday junction branch migration complex subunit RuvA (Agrobacterium fabrum (strain C58 / ATCC 33970) (Agrobacterium tumefaciens (strain C58))).